A 187-amino-acid polypeptide reads, in one-letter code: Protein GrpE (187 aa).

A compositionally biased stretch (basic and acidic residues) spans 1–11 (MTDSSNEHETE). Residues 1–21 (MTDSSNEHETENPSLPIPDNE) are disordered.

This sequence belongs to the GrpE family. Homodimer.

It localises to the cytoplasm. In terms of biological role, participates actively in the response to hyperosmotic and heat shock by preventing the aggregation of stress-denatured proteins, in association with DnaK and GrpE. It is the nucleotide exchange factor for DnaK and may function as a thermosensor. Unfolded proteins bind initially to DnaJ; upon interaction with the DnaJ-bound protein, DnaK hydrolyzes its bound ATP, resulting in the formation of a stable complex. GrpE releases ADP from DnaK; ATP binding to DnaK triggers the release of the substrate protein, thus completing the reaction cycle. Several rounds of ATP-dependent interactions between DnaJ, DnaK and GrpE are required for fully efficient folding. This is Protein GrpE from Chlamydia caviae (strain ATCC VR-813 / DSM 19441 / 03DC25 / GPIC) (Chlamydophila caviae).